Here is a 315-residue protein sequence, read N- to C-terminus: GTP cyclohydrolase MptA (315 aa).

The protein belongs to the GTP cyclohydrolase IV family. Homodimer. The cofactor is Fe(2+).

The catalysed reaction is GTP + H2O = 7,8-dihydroneopterin 2',3'-cyclic phosphate + formate + diphosphate + H(+). It participates in cofactor biosynthesis; 5,6,7,8-tetrahydromethanopterin biosynthesis. In terms of biological role, converts GTP to 7,8-dihydro-D-neopterin 2',3'-cyclic phosphate, the first intermediate in the biosynthesis of coenzyme methanopterin. This Methanococcus maripaludis (strain DSM 14266 / JCM 13030 / NBRC 101832 / S2 / LL) protein is GTP cyclohydrolase MptA.